A 297-amino-acid polypeptide reads, in one-letter code: L-threonate dehydrogenase (297 aa).

NAD(+) contacts are provided by residues 3 to 31 and T97; that span reads RNIG…VHAC. K173 is a catalytic residue. Residue K241 coordinates NAD(+).

The protein belongs to the HIBADH-related family. L-threonate dehydrogenase subfamily.

The catalysed reaction is L-threonate + NAD(+) = 2-dehydro-L-erythronate + NADH + H(+). Catalyzes oxidation of L-threonate to 2-oxo-tetronate. Can use either NAD(+) or NADP(+) as cosubstrate, with a preference for NAD(+). This Cupriavidus necator (strain ATCC 17699 / DSM 428 / KCTC 22496 / NCIMB 10442 / H16 / Stanier 337) (Ralstonia eutropha) protein is L-threonate dehydrogenase.